We begin with the raw amino-acid sequence, 116 residues long: Tachykinin-3 (116 aa).

The first 20 residues, 1-20, serve as a signal peptide directing secretion; the sequence is MRSAMLFAAVLALSLAWTFG. Positions 21–79 are excised as a propeptide; that stretch reads AVCEEPQGQGGRLSKDSDLYQLPPSLLRRLYDSRPVSLEGLLKVLSKASVGPKETSLPQ. Position 91 is a methionine amide (Met-91). The interval 93–116 is disordered; sequence KRNSQPDTPTDVVEENTPSFGILK. The propeptide occupies 95-116; it reads NSQPDTPTDVVEENTPSFGILK.

This sequence belongs to the tachykinin family.

It localises to the secreted. Its function is as follows. Tachykinins are active peptides which excite neurons, evoke behavioral responses, are potent vasodilators and secretagogues, and contract (directly or indirectly) many smooth muscles. Is a critical central regulator of gonadal function. The polypeptide is Tachykinin-3 (Tac3) (Mus musculus (Mouse)).